We begin with the raw amino-acid sequence, 670 residues long: ATP synthase subunit alpha 2 (670 aa).

Residue 180 to 187 (GDRATGKT) coordinates ATP. The disordered stretch occupies residues 525–670 (MPAEDAAGDI…DAEAEARHKR (146 aa)). Residues 543–588 (ARGDADRDADHGANREVSREVSPEASREVSREVSREVSHEADRDAA) show a composition bias toward basic and acidic residues. Low complexity predominate over residues 589 to 599 (ADAARVAGRAP). Basic and acidic residues predominate over residues 621–639 (ADGDRASASRPPPDARGDA). The span at 650-661 (ADANVNADANVD) shows a compositional bias: low complexity.

This sequence belongs to the ATPase alpha/beta chains family. As to quaternary structure, F-type ATPases have 2 components, CF(1) - the catalytic core - and CF(0) - the membrane proton channel. CF(1) has five subunits: alpha(3), beta(3), gamma(1), delta(1), epsilon(1). CF(0) has three main subunits: a(1), b(2) and c(9-12). The alpha and beta chains form an alternating ring which encloses part of the gamma chain. CF(1) is attached to CF(0) by a central stalk formed by the gamma and epsilon chains, while a peripheral stalk is formed by the delta and b chains.

It is found in the cell inner membrane. The enzyme catalyses ATP + H2O + 4 H(+)(in) = ADP + phosphate + 5 H(+)(out). Produces ATP from ADP in the presence of a proton gradient across the membrane. The alpha chain is a regulatory subunit. The chain is ATP synthase subunit alpha 2 from Burkholderia mallei (strain NCTC 10247).